The primary structure comprises 133 residues: Ribosome-binding factor A (133 aa).

It belongs to the RbfA family. In terms of assembly, monomer. Binds 30S ribosomal subunits, but not 50S ribosomal subunits or 70S ribosomes.

The protein localises to the cytoplasm. Functionally, one of several proteins that assist in the late maturation steps of the functional core of the 30S ribosomal subunit. Associates with free 30S ribosomal subunits (but not with 30S subunits that are part of 70S ribosomes or polysomes). Required for efficient processing of 16S rRNA. May interact with the 5'-terminal helix region of 16S rRNA. This is Ribosome-binding factor A from Bordetella parapertussis (strain 12822 / ATCC BAA-587 / NCTC 13253).